The chain runs to 474 residues: F420-non-reducing hydrogenase vhc subunit A (474 aa).

Ni(2+) contacts are provided by cysteine 61, cysteine 64, cysteine 445, and cysteine 448.

It belongs to the [NiFe]/[NiFeSe] hydrogenase large subunit family. As to quaternary structure, the F420-non-reducing hydrogenase vhc is composed of three subunits; VhcA, VhcD and VhcG. The cofactor is Ni(2+).

This is F420-non-reducing hydrogenase vhc subunit A (vhcA) from Methanococcus voltae.